A 521-amino-acid chain; its full sequence is uncharacterized protein (521 aa).

Positions 1-25 are disordered; it reads MLQRSLGVNGRKLAMSARSAKRERK. Helical transmembrane passes span 68 to 88, 114 to 134, 160 to 180, 192 to 212, 290 to 310, and 399 to 419; these read GAVW…GAVL, VLIV…SLTV, VVLA…HTVG, VAVT…IYFL, ALLV…GWCW, and LLFW…CAQI.

The protein resides in the cell membrane. This is an uncharacterized protein from Mycobacterium bovis (strain ATCC BAA-935 / AF2122/97).